Reading from the N-terminus, the 288-residue chain is MATYAVGDLQGCLQPLKCLLERVKFDPAVDRLWLVGDLVNRGPESLQTLRYLYSIRHSLTCVLGNHDLHLLAAWQNVERLKKSDTLREIIEAPDADQLLDWLRQQKLLHYDEPRGIALVHAGIPPQWTLGKALELAGEVEEVLRDDERLKLYLDGMYGNEPNKWSKNLGGVERLRVITNYLTRMRFCTGTGKLDLKSKEGLGTAPKGYKPWFAHKDRRSRHVKIIFGHWAALEGRVDEPGIIALDTGCVWGGTMTLYNVDSGEYLRCDCADDGTLRPPAQPTKLIDQP.

It belongs to the Ap4A hydrolase family.

The enzyme catalyses P(1),P(4)-bis(5'-adenosyl) tetraphosphate + H2O = 2 ADP + 2 H(+). Hydrolyzes diadenosine 5',5'''-P1,P4-tetraphosphate to yield ADP. This Pseudomonas putida (strain W619) protein is Bis(5'-nucleosyl)-tetraphosphatase, symmetrical.